We begin with the raw amino-acid sequence, 382 residues long: V-type proton ATPase subunit C 1 (382 aa).

The residue at position 2 (threonine 2) is an N-acetylthreonine.

This sequence belongs to the V-ATPase C subunit family. V-ATPase is a heteromultimeric enzyme made up of two complexes: the ATP-hydrolytic V1 complex and the proton translocation V0 complex. The V1 complex consists of three catalytic AB heterodimers that form a heterohexamer, three peripheral stalks each consisting of EG heterodimers, one central rotor including subunits D and F, and the regulatory subunits C and H. The proton translocation complex V0 consists of the proton transport subunit a, a ring of proteolipid subunits c9c'', rotary subunit d, subunits e and f, and two accessory subunits.

Its function is as follows. Subunit of the V1 complex of vacuolar(H+)-ATPase (V-ATPase), a multisubunit enzyme composed of a peripheral complex (V1) that hydrolyzes ATP and a membrane integral complex (V0) that translocates protons. V-ATPase is responsible for acidifying and maintaining the pH of intracellular compartments and in some cell types, is targeted to the plasma membrane, where it is responsible for acidifying the extracellular environment. Subunit C is necessary for the assembly of the catalytic sector of the enzyme and is likely to have a specific function in its catalytic activity. The protein is V-type proton ATPase subunit C 1 (atp6v1c1) of Xenopus tropicalis (Western clawed frog).